The primary structure comprises 402 residues: Endoplasmic reticulum junction formation protein lunapark-B (402 aa).

Residues 1–45 (MGAIISRWKTKPSTVELLESLDKDIKDLEEFRAKNQRLLKLWVGR) lie on the Cytoplasmic side of the membrane. A helical transmembrane segment spans residues 46 to 66 (LLFYSSALYLLTCLCVYYLYF). The Lumenal segment spans residues 67-77 (PQQWGARLITA). Residues 78–98 (LPLLAFPALVLLLRKMLIFLF) form a helical membrane-spanning segment. Residues 99 to 402 (SKRTERNNDK…EEQKKEDESN (304 aa)) are Cytoplasmic-facing. A coiled-coil region spans residues 100-128 (KRTERNNDKLEDLKTQKRKILEEVMETET). The segment at 142–240 (ESKKKAEAEA…PGPGSGMRPP (99 aa)) is disordered. Residues 205–222 (SASTPAGASQAETPQQMM) show a composition bias toward polar residues. The segment at 276-301 (CQQCFSHNGMALKEEFEFVAFRCAYC) adopts a C4-type; plays a role in ER morphology zinc-finger fold. Positions 311–402 (RPQAPRLPEF…EEQKKEDESN (92 aa)) are disordered. The span at 321–330 (SFERRLRSES) shows a compositional bias: basic and acidic residues. The segment covering 341–352 (TPEDSDAPEDDM) has biased composition (acidic residues). Over residues 385 to 402 (PHAEAEALEEQKKEDESN) the composition is skewed to basic and acidic residues.

This sequence belongs to the lunapark family. In terms of assembly, homodimer; homodimerization requires the C4-type zinc finger motif and decreases during mitosis in a phosphorylation-dependent manner. In terms of processing, phosphorylated. Phosphorylation occurs during interphase. Phosphorylation also occurs during mitosis; these phosphorylations reduce both its homodimerization and the ER three-way tubular junction formation.

Its subcellular location is the endoplasmic reticulum membrane. Functionally, endoplasmic reticulum (ER)-shaping membrane protein that plays a role in determining ER morphology. Involved in the stabilization of nascent three-way ER tubular junctions within the ER network. May also play a role as a curvature-stabilizing protein within three-way ER tubular junction network. The sequence is that of Endoplasmic reticulum junction formation protein lunapark-B (lnpkb) from Danio rerio (Zebrafish).